Reading from the N-terminus, the 319-residue chain is Taste receptor type 2 member 7 (319 aa).

Residues 1-9 (MADKVQTTL) are Extracellular-facing. Residues 10–30 (LFLAVGEFSVGILGNAFIGLV) form a helical membrane-spanning segment. At 31 to 55 (NCMDWVKKRKIASIDLILTSLAISR) the chain is on the cytoplasmic side. The helical transmembrane segment at 56–76 (ICLLCVILLDCFILVLYPDVY) threads the bilayer. At 77–94 (ATGKEMRIIDFFWTLTNH) the chain is on the extracellular side. A helical transmembrane segment spans residues 95-115 (LSIWFATCLSIYYXFRIANFF). At 116 to 128 (HPLFLWMKWRIDR) the chain is on the cytoplasmic side. Residues 129–149 (VISWILLGCVVLSVFISLPAT) traverse the membrane as a helical segment. The Extracellular segment spans residues 150–187 (ENLNADFRFCVKAKRKTNLTWSCRVNKTQHASTKLFLN). N-linked (GlcNAc...) asparagine glycans are attached at residues asparagine 167 and asparagine 175. Residues 188–208 (LATLLPFCVCLMSFFLLILSL) traverse the membrane as a helical segment. Over 209-235 (RRHIRRMQLSATGCRDPSTEAHVRALK) the chain is Cytoplasmic. Residues 236-256 (AVISFLLLFIAYYLSFLVATS) form a helical membrane-spanning segment. Residues 257–266 (SYFMPETELA) are Extracellular-facing. The chain crosses the membrane as a helical span at residues 267–287 (VIFGESIALIYPSSHSFILIL). Topologically, residues 288-319 (GNNKLRHASLKVIWKVMSILKGRKFQQHKQIG) are cytoplasmic.

It belongs to the G-protein coupled receptor T2R family.

Its subcellular location is the membrane. Its function is as follows. Gustducin-coupled receptor implicated in the perception of bitter compounds in the oral cavity and the gastrointestinal tract. Signals through PLCB2 and the calcium-regulated cation channel TRPM5. The sequence is that of Taste receptor type 2 member 7 (TAS2R7) from Pan troglodytes (Chimpanzee).